Consider the following 501-residue polypeptide: Cilia- and flagella-associated protein 45 (501 aa).

The stretch at 75–114 (MTAEDVAAAKREAEAKREQLQAVSKARKEKMLKLEEEAKK) forms a coiled coil.

This sequence belongs to the CFAP45 family.

The protein resides in the cell projection. It localises to the cilium. It is found in the flagellum. The chain is Cilia- and flagella-associated protein 45 from Chlamydomonas reinhardtii (Chlamydomonas smithii).